We begin with the raw amino-acid sequence, 31 residues long: Cytochrome b6-f complex subunit 6 (31 aa).

Residues 4–24 form a helical membrane-spanning segment; it reads IISYFGLLLATLTFTIVLFVG.

This sequence belongs to the PetL family. As to quaternary structure, the 4 large subunits of the cytochrome b6-f complex are cytochrome b6, subunit IV (17 kDa polypeptide, PetD), cytochrome f and the Rieske protein, while the 4 small subunits are PetG, PetL, PetM and PetN. The complex functions as a dimer.

Its subcellular location is the plastid. It is found in the chloroplast thylakoid membrane. Component of the cytochrome b6-f complex, which mediates electron transfer between photosystem II (PSII) and photosystem I (PSI), cyclic electron flow around PSI, and state transitions. PetL is important for photoautotrophic growth as well as for electron transfer efficiency and stability of the cytochrome b6-f complex. In Staurastrum punctulatum (Green alga), this protein is Cytochrome b6-f complex subunit 6.